A 277-amino-acid polypeptide reads, in one-letter code: MTTTVAVVGATGRMGQLISQIVEASDEFELVASLDSKGELSDMLGADIAVDVTLPAVSQGVVEYAVAHGMNVLVGTSGWTGERITELERRITGNLAVGVVIIPNFSVGSVLATSFAQMAARFYDSIEIVEAHGASKIDSPSGTAVRTAELMSQARGSRGPVQAPHTDQRARGQQVASIPVHSLRMQGVVAKQDVVFGGNGEVLTISHDTLAPSAYEAGILLALRATRTARGVVVGLDRLIDMDGSRERATQTAPTGAASGPVDDGGPSGQAATVTSA.

Gly-9–Met-14 is an NAD(+) binding site. An NADP(+)-binding site is contributed by Lys-37. Position 75-77 (Gly-75–Ser-77) interacts with NAD(+). His-132 acts as the Proton donor/acceptor in catalysis. Lys-136 functions as the Proton donor in the catalytic mechanism. Gly-142–Thr-143 is a binding site for (S)-2,3,4,5-tetrahydrodipicolinate. Residues Ser-245–Ala-277 are disordered.

Belongs to the DapB family.

It localises to the cytoplasm. The catalysed reaction is (S)-2,3,4,5-tetrahydrodipicolinate + NAD(+) + H2O = (2S,4S)-4-hydroxy-2,3,4,5-tetrahydrodipicolinate + NADH + H(+). The enzyme catalyses (S)-2,3,4,5-tetrahydrodipicolinate + NADP(+) + H2O = (2S,4S)-4-hydroxy-2,3,4,5-tetrahydrodipicolinate + NADPH + H(+). It functions in the pathway amino-acid biosynthesis; L-lysine biosynthesis via DAP pathway; (S)-tetrahydrodipicolinate from L-aspartate: step 4/4. Catalyzes the conversion of 4-hydroxy-tetrahydrodipicolinate (HTPA) to tetrahydrodipicolinate. This Clavibacter sepedonicus (Clavibacter michiganensis subsp. sepedonicus) protein is 4-hydroxy-tetrahydrodipicolinate reductase.